A 317-amino-acid chain; its full sequence is Methyltransferase CPUR_05424 (317 aa).

Residues 57-149 (DVGAGNGPYA…QLRPGGTFAC (93 aa)) are methyltransferase domain.

This sequence belongs to the methyltransferase superfamily.

It participates in pigment biosynthesis. In terms of biological role, methyltransferase; part of the ergochrome gene cluster responsible for the typical purple-black color of the ergot sclerotia. The ergochrome gene cluster produces several ergot pigments including the yellow ergochrome secalonic acid and its derivatives, as well as the red anthraquinones endocrocin and clavorubin. The pathway begins with the synthesis of atrochrysone thioester by the polyketide synthase (PKS) CPUR_05437. The atrochrysone carboxyl ACP thioesterase CPUR_05436 then breaks the thioester bond and releases the atrochrysone carboxylic acid from CPUR_05437. The atrochrysone carboxylic acid is then converted to atrochrysone which is further transformed into emodin anthrone. The next step is performed by the anthrone oxygenase CPUR_05434 that catalyzes the oxidation of emodinanthrone to emodin. Emodin is further modified to yield monodictyphenone via several steps involving CPUR_05427, CPUR_05428, CPUR_05429 and CPUR_05430. The short chain dehydrogenase/reductase CPUR_05418 then catalyzes the C-5 ketoreduction to give the xanthone skeleton of the monomeric units. Ergochromes formation requires further dimerization steps of different xanthone units, probably catalyzed by the cytochrome P450 monooxygenase CPUR_05419. CPUR_05425, CPUR_05426 and CPUR_05431 are unique to Claviceps, thus it is likely that they are involved in further modification of xanthone units or in their dimerization. The yellow ergochromes and the red anthraquinone pigments endocrocin and clavorubin are products from the same PKS derived precursors and the latter are likely shunt products in the pathway of xanthone biosynthesis. It is proposed that atrochrysone carboxylic acid released from the PKS CPUR_05437 can also be converted to endocrocin anthrone which is further oxidized into endocrocin by CPUR_05435. Endocrocin could be then modified to clavorubin, possibly by CPUR_05423 and CPUR_05431. Clavorubin is the principal anthraquinone metabolite produced by the cluster with a much higher yield compared to endocrocin. This chain is Methyltransferase CPUR_05424, found in Claviceps purpurea (strain 20.1) (Ergot fungus).